The primary structure comprises 117 residues: uncharacterized protein (117 aa).

A disordered region spans residues 96 to 117 (RKGGASKHRTLSAETGIRGEGE).

This is an uncharacterized protein from Saccharomyces cerevisiae (strain ATCC 204508 / S288c) (Baker's yeast).